The chain runs to 246 residues: Pyridoxine 5'-phosphate synthase (246 aa).

Asn12 serves as a coordination point for 3-amino-2-oxopropyl phosphate. 14–15 lines the 1-deoxy-D-xylulose 5-phosphate pocket; sequence DH. Arg23 provides a ligand contact to 3-amino-2-oxopropyl phosphate. His48 (proton acceptor) is an active-site residue. 1-deoxy-D-xylulose 5-phosphate contacts are provided by Arg50 and His55. Glu75 acts as the Proton acceptor in catalysis. Thr105 contributes to the 1-deoxy-D-xylulose 5-phosphate binding site. The active-site Proton donor is His196. Residues Gly197 and 218–219 contribute to the 3-amino-2-oxopropyl phosphate site; that span reads GH.

Belongs to the PNP synthase family. As to quaternary structure, homooctamer; tetramer of dimers.

The protein resides in the cytoplasm. The catalysed reaction is 3-amino-2-oxopropyl phosphate + 1-deoxy-D-xylulose 5-phosphate = pyridoxine 5'-phosphate + phosphate + 2 H2O + H(+). It functions in the pathway cofactor biosynthesis; pyridoxine 5'-phosphate biosynthesis; pyridoxine 5'-phosphate from D-erythrose 4-phosphate: step 5/5. Functionally, catalyzes the complicated ring closure reaction between the two acyclic compounds 1-deoxy-D-xylulose-5-phosphate (DXP) and 3-amino-2-oxopropyl phosphate (1-amino-acetone-3-phosphate or AAP) to form pyridoxine 5'-phosphate (PNP) and inorganic phosphate. The chain is Pyridoxine 5'-phosphate synthase from Pseudomonas syringae pv. syringae (strain B728a).